Reading from the N-terminus, the 296-residue chain is Endochitinase 3 (296 aa).

The GH18 domain maps to 12–296; it reads HKLTVYWGAE…VKNGQLPEED (285 aa). N-linked (GlcNAc...) asparagine glycosylation is found at Asn32 and Asn152. Glu153 functions as the Proton donor in the catalytic mechanism. N-linked (GlcNAc...) asparagine glycosylation occurs at Asn228.

The protein belongs to the glycosyl hydrolase 18 family. Chitinase class III subfamily.

It is found in the secreted. The enzyme catalyses Random endo-hydrolysis of N-acetyl-beta-D-glucosaminide (1-&gt;4)-beta-linkages in chitin and chitodextrins.. Secreted chitinase involved in the degradation of chitin, a component of the cell walls of fungi and exoskeletal elements of some animals (including worms and arthropods). Participates in the infection process and directly acts in the penetration process of the host cuticle. Involved in heat-shock adaptation. This Metarhizium anisopliae (Entomophthora anisopliae) protein is Endochitinase 3 (chi3).